A 411-amino-acid chain; its full sequence is MIAEKVLFLVLDGISDRPCEALDGLTPLAAARTPVLDRLAAEGVCGIMDSVAPGIRPGSDTSHLALLGYPPQEFYTGRGPLEAEGTGIHMTAGMIGFRCNFATVDADGLVTDRRAGRISGTEPLAEAIREGVDLSGLGLEFRFEAGAGHRAALALIGEGLGDKVSSNDPKKEGVQPLTIRPGSDDPADAKTARACNEFIRQSREILDGHPVNVRRMEEGLPPGNLLLIRGAGKMGALPQFPERYGLSGSVISAATLISGIGMVVGLEHIPVPGTTGSVDSDLDAKVRAAIGELGRKDFVLMNIKGADEAGHDGKSIQKRDFIEVIDKALAPLLDLKNTLILVCADHSTPCSVKDHSADPVPVVIRGPGVRIDRTNRFDEVSCAEGGLHRIRGRDLMPIILDLINKSHKYGA.

The interval 164–190 is disordered; it reads VSSNDPKKEGVQPLTIRPGSDDPADAK.

This sequence belongs to the BPG-independent phosphoglycerate mutase family. A-PGAM subfamily.

The catalysed reaction is (2R)-2-phosphoglycerate = (2R)-3-phosphoglycerate. It participates in carbohydrate degradation; glycolysis; pyruvate from D-glyceraldehyde 3-phosphate: step 3/5. Catalyzes the interconversion of 2-phosphoglycerate and 3-phosphoglycerate. In Methanoculleus marisnigri (strain ATCC 35101 / DSM 1498 / JR1), this protein is 2,3-bisphosphoglycerate-independent phosphoglycerate mutase.